We begin with the raw amino-acid sequence, 426 residues long: Selenocysteine lyase (426 aa).

Lys-239 is subject to N6-(pyridoxal phosphate)lysine. The active-site S-selanylcysteine intermediate is the Cys-367.

The protein belongs to the class-V pyridoxal-phosphate-dependent aminotransferase family. As to quaternary structure, homodimer. Pyridoxal 5'-phosphate is required as a cofactor.

Its subcellular location is the cytoplasm. The protein localises to the cytosol. The catalysed reaction is L-selenocysteine + AH2 = hydrogenselenide + L-alanine + A + H(+). Functionally, catalyzes the decomposition of L-selenocysteine to L-alanine and elemental selenium. This Xenopus laevis (African clawed frog) protein is Selenocysteine lyase (scly).